A 459-amino-acid chain; its full sequence is Exodeoxyribonuclease 7 large subunit (459 aa).

The protein belongs to the XseA family. Heterooligomer composed of large and small subunits.

It is found in the cytoplasm. The catalysed reaction is Exonucleolytic cleavage in either 5'- to 3'- or 3'- to 5'-direction to yield nucleoside 5'-phosphates.. Functionally, bidirectionally degrades single-stranded DNA into large acid-insoluble oligonucleotides, which are then degraded further into small acid-soluble oligonucleotides. The sequence is that of Exodeoxyribonuclease 7 large subunit from Pseudomonas fluorescens (strain ATCC BAA-477 / NRRL B-23932 / Pf-5).